Consider the following 59-residue polypeptide: U-myrmeciitoxin(01)-Mg5b (59 aa).

The first 21 residues, Met-1 to Ala-21, serve as a signal peptide directing secretion. A propeptide spanning residues Ser-22–Gly-38 is cleaved from the precursor.

Expressed by the venom gland.

It is found in the secreted. Its function is as follows. May have antimicrobial properties, like most ant linear peptides. The polypeptide is U-myrmeciitoxin(01)-Mg5b (Myrmecia gulosa (Red bulldog ant)).